The primary structure comprises 204 residues: Methylthioribulose-1-phosphate dehydratase (204 aa).

The Zn(2+) site is built by histidine 94 and histidine 96.

This sequence belongs to the aldolase class II family. MtnB subfamily. Requires Zn(2+) as cofactor.

The enzyme catalyses 5-(methylsulfanyl)-D-ribulose 1-phosphate = 5-methylsulfanyl-2,3-dioxopentyl phosphate + H2O. Its pathway is amino-acid biosynthesis; L-methionine biosynthesis via salvage pathway; L-methionine from S-methyl-5-thio-alpha-D-ribose 1-phosphate: step 2/6. Its function is as follows. Catalyzes the dehydration of methylthioribulose-1-phosphate (MTRu-1-P) into 2,3-diketo-5-methylthiopentyl-1-phosphate (DK-MTP-1-P). This is Methylthioribulose-1-phosphate dehydratase from Serratia proteamaculans (strain 568).